The chain runs to 152 residues: Transcriptional regulator MraZ (152 aa).

SpoVT-AbrB domains are found at residues 5–52 and 81–124; these read ATLV…PLPE and ASEC…DETT.

Belongs to the MraZ family. As to quaternary structure, forms oligomers.

The protein resides in the cytoplasm. The protein localises to the nucleoid. Negatively regulates its own expression and that of the subsequent genes in the proximal part of the division and cell wall (dcw) gene cluster. Acts by binding directly to DNA. May also regulate the expression of genes outside the dcw cluster. In Citrobacter koseri (strain ATCC BAA-895 / CDC 4225-83 / SGSC4696), this protein is Transcriptional regulator MraZ.